The primary structure comprises 87 residues: Toxin Cll3 (87 aa).

The N-terminal stretch at 1–19 (MNSLLMITACLAVIGTVWA) is a signal peptide. An LCN-type CS-alpha/beta domain is found at 20–85 (KEGYIVNYYD…VWPLPNKTCY (66 aa)). Cystine bridges form between cysteine 31-cysteine 84, cysteine 35-cysteine 60, cysteine 44-cysteine 65, and cysteine 48-cysteine 67. The residue at position 85 (tyrosine 85) is a Tyrosine amide.

The protein belongs to the long (4 C-C) scorpion toxin superfamily. Sodium channel inhibitor family. Beta subfamily. Expressed by the venom gland.

The protein localises to the secreted. Functionally, beta toxins bind voltage-independently at site-4 of sodium channels (Nav) and shift the voltage of activation toward more negative potentials thereby affecting sodium channel activation and promoting spontaneous and repetitive firing. The polypeptide is Toxin Cll3 (Centruroides limpidus (Mexican scorpion)).